The sequence spans 120 residues: Galanin-like peptide (120 aa).

Positions 1 to 22 (MALTVPLIVLAVLLSLMESPAS) are cleaved as a signal peptide. Residues 85-120 (SLGETFAKPDSGVTFVGVPDVVPWKRIRPGTTRFQI) constitute a propeptide that is removed on maturation.

Belongs to the galanin family.

It localises to the secreted. Functionally, hypothalamic neuropeptide which binds to the G-protein-coupled galanin receptors (GALR1, GALR2 and GALR3). Involved in a large number of putative physiological functions in CNS homeostatic processes, including the regulation of gonadotropin-releasing hormone secretion. This is Galanin-like peptide (GALP) from Sus scrofa (Pig).